The sequence spans 171 residues: 3-hydroxydecanoyl-[acyl-carrier-protein] dehydratase (171 aa).

His70 is a catalytic residue.

Belongs to the thioester dehydratase family. FabA subfamily. In terms of assembly, homodimer.

It is found in the cytoplasm. The enzyme catalyses a (3R)-hydroxyacyl-[ACP] = a (2E)-enoyl-[ACP] + H2O. It catalyses the reaction (3R)-hydroxydecanoyl-[ACP] = (2E)-decenoyl-[ACP] + H2O. It carries out the reaction (2E)-decenoyl-[ACP] = (3Z)-decenoyl-[ACP]. The protein operates within lipid metabolism; fatty acid biosynthesis. Its function is as follows. Necessary for the introduction of cis unsaturation into fatty acids. Catalyzes the dehydration of (3R)-3-hydroxydecanoyl-ACP to E-(2)-decenoyl-ACP and then its isomerization to Z-(3)-decenoyl-ACP. Can catalyze the dehydratase reaction for beta-hydroxyacyl-ACPs with saturated chain lengths up to 16:0, being most active on intermediate chain length. This is 3-hydroxydecanoyl-[acyl-carrier-protein] dehydratase from Shewanella baltica (strain OS223).